A 264-amino-acid polypeptide reads, in one-letter code: Hemin import ATP-binding protein HmuV (264 aa).

The region spanning 2–242 (IEAVNICVQR…QNLSDAYHCS (241 aa)) is the ABC transporter domain. 34-41 (GPNGSGKS) serves as a coordination point for ATP.

The protein belongs to the ABC transporter superfamily. Heme (hemin) importer (TC 3.A.1.14.5) family. The complex is composed of two ATP-binding proteins (HmuV), two transmembrane proteins (HmuU) and a solute-binding protein (HmuT).

It is found in the cell inner membrane. Functionally, part of the ABC transporter complex HmuTUV involved in hemin import. Responsible for energy coupling to the transport system. The polypeptide is Hemin import ATP-binding protein HmuV (Bartonella quintana (strain Toulouse) (Rochalimaea quintana)).